The chain runs to 100 residues: MITKEEVKKITKLARLKFEEDKVEEFSSRLSSIMDMINILNEIDCTDVKPLTSVCDMQARMRPDEVTSKDHSNELFDNVQGASQQLAKEVKYFITPKVVE.

The protein belongs to the GatC family. As to quaternary structure, heterotrimer of A, B and C subunits.

The enzyme catalyses L-glutamyl-tRNA(Gln) + L-glutamine + ATP + H2O = L-glutaminyl-tRNA(Gln) + L-glutamate + ADP + phosphate + H(+). The catalysed reaction is L-aspartyl-tRNA(Asn) + L-glutamine + ATP + H2O = L-asparaginyl-tRNA(Asn) + L-glutamate + ADP + phosphate + 2 H(+). Functionally, allows the formation of correctly charged Asn-tRNA(Asn) or Gln-tRNA(Gln) through the transamidation of misacylated Asp-tRNA(Asn) or Glu-tRNA(Gln) in organisms which lack either or both of asparaginyl-tRNA or glutaminyl-tRNA synthetases. The reaction takes place in the presence of glutamine and ATP through an activated phospho-Asp-tRNA(Asn) or phospho-Glu-tRNA(Gln). This chain is Aspartyl/glutamyl-tRNA(Asn/Gln) amidotransferase subunit C, found in Rickettsia bellii (strain OSU 85-389).